We begin with the raw amino-acid sequence, 354 residues long: Hyaluronan and proteoglycan link protein 1 (354 aa).

A propeptide spanning residues 1–9 (MRSLLFLVL) is cleaved from the precursor. Residues 38–152 (PRLLVEAEQA…EGLEDDTAVV (115 aa)) form the Ig-like V-type domain. N56 carries N-linked (GlcNAc...) asparagine glycosylation. Cystine bridges form between C61/C139, C181/C252, C205/C226, C279/C349, and C304/C325. 2 Link domains span residues 159 to 254 (VVFP…FCFT) and 259 to 351 (GRFY…YCFR).

The protein belongs to the HAPLN family.

The protein resides in the secreted. Its subcellular location is the extracellular space. It localises to the extracellular matrix. Its function is as follows. Stabilizes the aggregates of proteoglycan monomers with hyaluronic acid in the extracellular cartilage matrix. The sequence is that of Hyaluronan and proteoglycan link protein 1 (Hapln1) from Rattus norvegicus (Rat).